The primary structure comprises 583 residues: Membrane protein insertase YidC (583 aa).

The chain crosses the membrane as a helical span at residues 5–25 (SVTGLALIALIMIVWLQFMSP). The interval 28–50 (KSVQPDNRPKAQTTATVSQEKTE) is disordered. Over residues 37–46 (KAQTTATVSQ) the composition is skewed to polar residues. Helical transmembrane passes span 341–361 (PFAE…ISNY), 362–382 (GLII…LSMA), 427–447 (LGGC…FYVF), 477–497 (IPVY…TVFI), and 515–535 (LYIF…GLGL).

It belongs to the OXA1/ALB3/YidC family. Type 1 subfamily. In terms of assembly, interacts with the Sec translocase complex via SecD. Specifically interacts with transmembrane segments of nascent integral membrane proteins during membrane integration.

It localises to the cell inner membrane. Functionally, required for the insertion and/or proper folding and/or complex formation of integral membrane proteins into the membrane. Involved in integration of membrane proteins that insert both dependently and independently of the Sec translocase complex, as well as at least some lipoproteins. Aids folding of multispanning membrane proteins. The protein is Membrane protein insertase YidC of Chlorobium limicola (strain DSM 245 / NBRC 103803 / 6330).